A 515-amino-acid polypeptide reads, in one-letter code: Maturase K (515 aa).

This sequence belongs to the intron maturase 2 family. MatK subfamily.

Its subcellular location is the plastid. The protein resides in the chloroplast. Usually encoded in the trnK tRNA gene intron. Probably assists in splicing its own and other chloroplast group II introns. The polypeptide is Maturase K (Ceratophyllum demersum (Rigid hornwort)).